A 129-amino-acid chain; its full sequence is Large ribosomal subunit protein uL22 (129 aa).

The protein belongs to the universal ribosomal protein uL22 family. In terms of assembly, part of the 50S ribosomal subunit.

Functionally, this protein binds specifically to 23S rRNA; its binding is stimulated by other ribosomal proteins, e.g. L4, L17, and L20. It is important during the early stages of 50S assembly. It makes multiple contacts with different domains of the 23S rRNA in the assembled 50S subunit and ribosome. The globular domain of the protein is located near the polypeptide exit tunnel on the outside of the subunit, while an extended beta-hairpin is found that lines the wall of the exit tunnel in the center of the 70S ribosome. The sequence is that of Large ribosomal subunit protein uL22 from Metamycoplasma hominis (strain ATCC 23114 / DSM 25592 / NBRC 14850 / NCTC 10111 / PG21) (Mycoplasma hominis).